Reading from the N-terminus, the 459-residue chain is GTPase Der (459 aa).

2 consecutive EngA-type G domains span residues 3 to 169 (PLVA…PPKE) and 183 to 358 (IRLA…DQFR). GTP is bound by residues 9–16 (GRPNVGKS), 56–60 (DTGGF), 119–122 (NKLD), 189–196 (GRPNVGKS), 236–240 (DTAGI), and 301–304 (NKWD). The KH-like domain maps to 359–442 (FRAPTPQLNR…PIRLIFKGRP (84 aa)).

This sequence belongs to the TRAFAC class TrmE-Era-EngA-EngB-Septin-like GTPase superfamily. EngA (Der) GTPase family. As to quaternary structure, associates with the 50S ribosomal subunit.

In terms of biological role, GTPase that plays an essential role in the late steps of ribosome biogenesis. The polypeptide is GTPase Der (Myxococcus xanthus (strain DK1622)).